The following is a 320-amino-acid chain: Sensor histidine kinase YbdK (320 aa).

A helical transmembrane segment spans residues 1-21 (MLLFTAVISVPMLLLAVSVLM). At 22 to 41 (SVIYDSMFKPMNHGMPFHRS) the chain is on the extracellular side. Residues 42–62 (FAYPAMIVVFLISLLLLAFLF) traverse the membrane as a helical segment. The Cytoplasmic segment spans residues 63 to 320 (SKSIHSLLHK…NGTGFLFSKE (258 aa)). An HAMP domain is found at 67–120 (HSLLHKINLLNQTIRHLASDQRVPDKIEVKRADEIGELIKSVNLLIERTTYREL). Residues 135-320 (KLRHDINTPL…NGTGFLFSKE (186 aa)) form the Histidine kinase domain. The residue at position 138 (His138) is a Phosphohistidine; by autocatalysis.

The protein resides in the cell membrane. It carries out the reaction ATP + protein L-histidine = ADP + protein N-phospho-L-histidine.. Member of the two-component regulatory system YbdK/YbdJ. Probably activates YbdJ by phosphorylation. This Bacillus subtilis (strain 168) protein is Sensor histidine kinase YbdK (ybdK).